The chain runs to 215 residues: Cytochrome b6 (215 aa).

Residues 32-52 traverse the membrane as a helical segment; the sequence is IFYCLGGITLTCFLVQVATGF. Cys-35 lines the heme c pocket. His-86 and His-100 together coordinate heme b. 3 consecutive transmembrane segments (helical) span residues 90-110, 116-136, and 186-206; these read ASMMVLMTILHVFRVYLTGGF, LTWVTGVVLAVLTASFGVTGY, and LHTFVLPLLTAVFMLMHFLMI. Positions 187 and 202 each coordinate heme b.

This sequence belongs to the cytochrome b family. PetB subfamily. The 4 large subunits of the cytochrome b6-f complex are cytochrome b6, subunit IV (17 kDa polypeptide, PetD), cytochrome f and the Rieske protein, while the 4 small subunits are PetG, PetL, PetM and PetN. The complex functions as a dimer. It depends on heme b as a cofactor. Heme c serves as cofactor.

Its subcellular location is the plastid. It is found in the chloroplast thylakoid membrane. Functionally, component of the cytochrome b6-f complex, which mediates electron transfer between photosystem II (PSII) and photosystem I (PSI), cyclic electron flow around PSI, and state transitions. This chain is Cytochrome b6, found in Citrus sinensis (Sweet orange).